We begin with the raw amino-acid sequence, 229 residues long: Urease accessory protein UreF (229 aa).

This sequence belongs to the UreF family. In terms of assembly, ureD, UreF and UreG form a complex that acts as a GTP-hydrolysis-dependent molecular chaperone, activating the urease apoprotein by helping to assemble the nickel containing metallocenter of UreC. The UreE protein probably delivers the nickel.

It localises to the cytoplasm. Functionally, required for maturation of urease via the functional incorporation of the urease nickel metallocenter. In Staphylococcus aureus (strain JH1), this protein is Urease accessory protein UreF.